Reading from the N-terminus, the 426-residue chain is Dihydroorotase (426 aa).

Residues H58 and H60 each coordinate Zn(2+). Substrate-binding positions include 60-62 and N92; that span reads HLR. Zn(2+) contacts are provided by D150, H177, and H230. N276 is a binding site for substrate. Position 303 (D303) interacts with Zn(2+). D303 is an active-site residue. Residues H307 and 321–322 each bind substrate; that span reads FG.

It belongs to the metallo-dependent hydrolases superfamily. DHOase family. Class I DHOase subfamily. Requires Zn(2+) as cofactor.

It catalyses the reaction (S)-dihydroorotate + H2O = N-carbamoyl-L-aspartate + H(+). It participates in pyrimidine metabolism; UMP biosynthesis via de novo pathway; (S)-dihydroorotate from bicarbonate: step 3/3. In terms of biological role, catalyzes the reversible cyclization of carbamoyl aspartate to dihydroorotate. The polypeptide is Dihydroorotase (Listeria monocytogenes serotype 4a (strain HCC23)).